The following is a 164-amino-acid chain: METVLKTLFVLLVATSLTLAKDLPQATRVLQTLSRGWGDNLEWVQTYEEGLYKAKTENKPLILINHRNDCPHSLALKKAFAEHQGIQKLAEEFVLLNVVYDPTDKNLQLDGQYVPKVVFVDPSLVVRADLPGKYSNHQYTYEPADIDLLFENMKKALILLKTEL.

A signal peptide spans 1–20; that stretch reads METVLKTLFVLLVATSLTLA. 2 consecutive short sequence motifs (homodimer stabilization; interchain) follow at residues 34–43 and 49–56; these read SRGWGDNLEW and EGLYKAKT.

It belongs to the AGR family. As to quaternary structure, monomer and homodimer.

The protein resides in the secreted. It is found in the endoplasmic reticulum. This is Anterior gradient protein 2 from Xenopus tropicalis (Western clawed frog).